The primary structure comprises 89 residues: Putative regulatory protein Nther_1328 (89 aa).

It belongs to the RemA family.

The chain is Putative regulatory protein Nther_1328 from Natranaerobius thermophilus (strain ATCC BAA-1301 / DSM 18059 / JW/NM-WN-LF).